Consider the following 78-residue polypeptide: Translation initiation factor IF-1, plastid (78 aa).

The 72-residue stretch at M1–R72 folds into the S1-like domain.

This sequence belongs to the IF-1 family. As to quaternary structure, component of the 30S ribosomal translation pre-initiation complex which assembles on the 30S ribosome in the order IF-2 and IF-3, IF-1 and N-formylmethionyl-tRNA(fMet); mRNA recruitment can occur at any time during PIC assembly.

It localises to the plastid. One of the essential components for the initiation of protein synthesis. Stabilizes the binding of IF-2 and IF-3 on the 30S subunit to which N-formylmethionyl-tRNA(fMet) subsequently binds. Helps modulate mRNA selection, yielding the 30S pre-initiation complex (PIC). Upon addition of the 50S ribosomal subunit IF-1, IF-2 and IF-3 are released leaving the mature 70S translation initiation complex. This chain is Translation initiation factor IF-1, plastid, found in Aneura mirabilis (Parasitic liverwort).